The sequence spans 198 residues: Protein GrpE (198 aa).

It belongs to the GrpE family. Homodimer.

The protein localises to the cytoplasm. In terms of biological role, participates actively in the response to hyperosmotic and heat shock by preventing the aggregation of stress-denatured proteins, in association with DnaK and GrpE. It is the nucleotide exchange factor for DnaK and may function as a thermosensor. Unfolded proteins bind initially to DnaJ; upon interaction with the DnaJ-bound protein, DnaK hydrolyzes its bound ATP, resulting in the formation of a stable complex. GrpE releases ADP from DnaK; ATP binding to DnaK triggers the release of the substrate protein, thus completing the reaction cycle. Several rounds of ATP-dependent interactions between DnaJ, DnaK and GrpE are required for fully efficient folding. In Actinobacillus pleuropneumoniae serotype 7 (strain AP76), this protein is Protein GrpE.